A 49-amino-acid chain; its full sequence is Large ribosomal subunit protein bL33 (49 aa).

It belongs to the bacterial ribosomal protein bL33 family.

The protein is Large ribosomal subunit protein bL33 of Clostridium perfringens (strain ATCC 13124 / DSM 756 / JCM 1290 / NCIMB 6125 / NCTC 8237 / Type A).